The sequence spans 74 residues: DNA-directed RNA polymerase subunit omega (74 aa).

The protein belongs to the RNA polymerase subunit omega family. As to quaternary structure, the RNAP catalytic core consists of 2 alpha, 1 beta/beta' and 1 omega subunit. When a sigma factor is associated with the core the holoenzyme is formed, which can initiate transcription.

The enzyme catalyses RNA(n) + a ribonucleoside 5'-triphosphate = RNA(n+1) + diphosphate. Promotes RNA polymerase assembly. Latches the N- and C-terminal regions of the beta' subunit thereby facilitating its interaction with the beta and alpha subunits. This is DNA-directed RNA polymerase subunit omega from Helicobacter hepaticus (strain ATCC 51449 / 3B1).